The following is a 343-amino-acid chain: tRNA N6-adenosine threonylcarbamoyltransferase (343 aa).

H120 and H124 together coordinate Fe cation. Substrate contacts are provided by residues 142-146 (VVSGG), D175, G188, D192, and N281. D310 lines the Fe cation pocket.

The protein belongs to the KAE1 / TsaD family. The cofactor is Fe(2+).

It localises to the cytoplasm. It carries out the reaction L-threonylcarbamoyladenylate + adenosine(37) in tRNA = N(6)-L-threonylcarbamoyladenosine(37) in tRNA + AMP + H(+). Functionally, required for the formation of a threonylcarbamoyl group on adenosine at position 37 (t(6)A37) in tRNAs that read codons beginning with adenine. Is involved in the transfer of the threonylcarbamoyl moiety of threonylcarbamoyl-AMP (TC-AMP) to the N6 group of A37, together with TsaE and TsaB. TsaD likely plays a direct catalytic role in this reaction. The protein is tRNA N6-adenosine threonylcarbamoyltransferase of Bacillus anthracis.